Consider the following 781-residue polypeptide: Probable serine/threonine-protein kinase C70.05c (781 aa).

Disordered stretches follow at residues 1–315 and 368–417; these read MPSD…PLVS and YSGK…TNIS. Low complexity predominate over residues 21–31; it reads ESPSSRSIGSG. Positions 43–63 are enriched in polar residues; it reads FKNSFLSRKNSSQIKSPSDYK. A compositionally biased stretch (basic and acidic residues) spans 64 to 73; that stretch reads SSAHEQRVNH. The segment covering 74-92 has biased composition (polar residues); the sequence is TTDSMAHVPGNNSPLQTPQ. At Ser94 the chain carries Phosphoserine. Positions 112-121 are enriched in basic residues; that stretch reads SRHHKPHHSG. Composition is skewed to polar residues over residues 136 to 146, 161 to 195, and 206 to 228; these read SNANSPTSESP, KNTS…PNSR, and NSAS…SLSR. Ser253 is subject to Phosphoserine. Over residues 272-304 the composition is skewed to low complexity; the sequence is PLTASPTPSSPTGTPNSMSKSPSLSSLASTGAS. Positions 379–406 are enriched in polar residues; that stretch reads NVGSSANTAPNSPTSANSSEGNQGNGPT. The region spanning 432-742 is the Protein kinase domain; it reads AKRVVPRLSA…AQEALNLPFV (311 aa). Residues 452 to 460 and Lys480 contribute to the ATP site; that span reads MGSGATAVI. The active-site Proton acceptor is the Asp584.

This sequence belongs to the protein kinase superfamily. Ser/Thr protein kinase family.

The protein resides in the cytoplasm. The enzyme catalyses L-seryl-[protein] + ATP = O-phospho-L-seryl-[protein] + ADP + H(+). It carries out the reaction L-threonyl-[protein] + ATP = O-phospho-L-threonyl-[protein] + ADP + H(+). The chain is Probable serine/threonine-protein kinase C70.05c from Schizosaccharomyces pombe (strain 972 / ATCC 24843) (Fission yeast).